The primary structure comprises 356 residues: Protein-glutamate methylesterase/protein-glutamine glutaminase 2 (356 aa).

The Response regulatory domain occupies 7–124; the sequence is KVLCVDDSAL…RDGLMEYTDT (118 aa). Residue Asp58 is modified to 4-aspartylphosphate. A CheB-type methylesterase domain is found at 157-349; sequence LLSTEKLIIL…QRVMARLATY (193 aa). Catalysis depends on residues Ser169, His195, and Asp291.

This sequence belongs to the CheB family. Post-translationally, phosphorylated by CheA. Phosphorylation of the N-terminal regulatory domain activates the methylesterase activity.

It is found in the cytoplasm. The catalysed reaction is [protein]-L-glutamate 5-O-methyl ester + H2O = L-glutamyl-[protein] + methanol + H(+). It carries out the reaction L-glutaminyl-[protein] + H2O = L-glutamyl-[protein] + NH4(+). Involved in chemotaxis. Part of a chemotaxis signal transduction system that modulates chemotaxis in response to various stimuli. Catalyzes the demethylation of specific methylglutamate residues introduced into the chemoreceptors (methyl-accepting chemotaxis proteins or MCP) by CheR. Also mediates the irreversible deamidation of specific glutamine residues to glutamic acid. This chain is Protein-glutamate methylesterase/protein-glutamine glutaminase 2, found in Cupriavidus pinatubonensis (strain JMP 134 / LMG 1197) (Cupriavidus necator (strain JMP 134)).